Consider the following 311-residue polypeptide: Pyrimidine-specific ribonucleoside hydrolase RihA (311 aa).

Histidine 240 is a catalytic residue.

Belongs to the IUNH family. RihA subfamily.

Its function is as follows. Hydrolyzes cytidine or uridine to ribose and cytosine or uracil, respectively. This chain is Pyrimidine-specific ribonucleoside hydrolase RihA, found in Salmonella enteritidis PT4 (strain P125109).